Reading from the N-terminus, the 170-residue chain is MTIKNFQNNNDWSELLVSVRRVTTVTKGGRRFSFSILVVVGDEKGRVGCGMGKHAEVAEARIKAVNAAKKSMIRVYLREGRTLHHDIKAKFCSGEIVLRAARAGTGIIAGGAIRSVFEVLGIKDVVAKSTRSNNPHNVICAVFKAFDNMLSPRQVASKRGKKISEVVGNR.

Positions 12–75 (WSELLVSVRR…NAAKKSMIRV (64 aa)) constitute an S5 DRBM domain.

The protein belongs to the universal ribosomal protein uS5 family. In terms of assembly, part of the 30S ribosomal subunit. Contacts proteins S4 and S8.

Functionally, with S4 and S12 plays an important role in translational accuracy. Located at the back of the 30S subunit body where it stabilizes the conformation of the head with respect to the body. This chain is Small ribosomal subunit protein uS5, found in Wolbachia sp. subsp. Brugia malayi (strain TRS).